The following is a 1194-amino-acid chain: DNA polymerase catalytic subunit (1194 aa).

This sequence belongs to the DNA polymerase type-B family. Forms a complex with the ssDNA-binding protein, the DNA polymerase processivity factor, and the alkaline exonuclease. Interacts with the helicase-primase complex composed of the primase, the helicase and the primase-associated factor; this interaction may coordinate leading and lagging strand DNA synthesis at the replication fork.

The protein localises to the host nucleus. The enzyme catalyses DNA(n) + a 2'-deoxyribonucleoside 5'-triphosphate = DNA(n+1) + diphosphate. The catalysed reaction is Endonucleolytic cleavage to 5'-phosphomonoester.. Replicates viral genomic DNA. The replication complex is composed of six viral proteins: the DNA polymerase, processivity factor, primase, primase-associated factor, helicase, and ssDNA-binding protein. Additionally, the polymerase contains an intrinsic ribonuclease H (RNase H) activity that specifically degrades RNA/DNA heteroduplexes or duplex DNA substrates in the 5' to 3' direction. Therefore, it can catalyze the excision of the RNA primers that initiate the synthesis of Okazaki fragments at a replication fork during viral DNA replication. The chain is DNA polymerase catalytic subunit from Varicella-zoster virus (strain Oka vaccine) (HHV-3).